Reading from the N-terminus, the 400-residue chain is Acetate kinase (400 aa).

Position 10 (asparagine 10) interacts with Mg(2+). Lysine 17 is an ATP binding site. Position 91 (arginine 91) interacts with substrate. The active-site Proton donor/acceptor is the aspartate 150. Residues 210 to 214, 285 to 287, and 333 to 337 contribute to the ATP site; these read HLGNG, DCR, and GIGEN. Glutamate 387 contributes to the Mg(2+) binding site.

This sequence belongs to the acetokinase family. In terms of assembly, homodimer. Mg(2+) serves as cofactor. The cofactor is Mn(2+).

It localises to the cytoplasm. The enzyme catalyses acetate + ATP = acetyl phosphate + ADP. It participates in metabolic intermediate biosynthesis; acetyl-CoA biosynthesis; acetyl-CoA from acetate: step 1/2. Its function is as follows. Catalyzes the formation of acetyl phosphate from acetate and ATP. Can also catalyze the reverse reaction. This chain is Acetate kinase, found in Yersinia pseudotuberculosis serotype IB (strain PB1/+).